The primary structure comprises 155 residues: Ribosomal RNA large subunit methyltransferase H (155 aa).

Residues Leu-72, Gly-104, and 123–128 (LAKITL) each bind S-adenosyl-L-methionine.

The protein belongs to the RNA methyltransferase RlmH family. Homodimer.

It is found in the cytoplasm. The catalysed reaction is pseudouridine(1915) in 23S rRNA + S-adenosyl-L-methionine = N(3)-methylpseudouridine(1915) in 23S rRNA + S-adenosyl-L-homocysteine + H(+). Functionally, specifically methylates the pseudouridine at position 1915 (m3Psi1915) in 23S rRNA. This is Ribosomal RNA large subunit methyltransferase H from Mycoplasma capricolum subsp. capricolum (strain California kid / ATCC 27343 / NCTC 10154).